Here is a 117-residue protein sequence, read N- to C-terminus: Large ribosomal subunit protein eL8 (117 aa).

This sequence belongs to the eukaryotic ribosomal protein eL8 family. Part of the 50S ribosomal subunit. Probably part of the RNase P complex.

The protein localises to the cytoplasm. In terms of biological role, multifunctional RNA-binding protein that recognizes the K-turn motif in ribosomal RNA, the RNA component of RNase P, box H/ACA, box C/D and box C'/D' sRNAs. The polypeptide is Large ribosomal subunit protein eL8 (Methanococcus aeolicus (strain ATCC BAA-1280 / DSM 17508 / OCM 812 / Nankai-3)).